Reading from the N-terminus, the 286-residue chain is Protease HtpX homolog (286 aa).

The next 2 membrane-spanning stretches (helical) occupy residues 7 to 27 (TFML…MIGG) and 29 to 49 (SGMM…YWFS). Residue histidine 131 coordinates Zn(2+). The active site involves glutamate 132. Histidine 135 lines the Zn(2+) pocket. 2 helical membrane-spanning segments follow: residues 146–166 (ISAT…FFGG) and 177–197 (IAGI…QMAI). Zn(2+) is bound at residue glutamate 202.

It belongs to the peptidase M48B family. Zn(2+) is required as a cofactor.

It is found in the cell inner membrane. This Ralstonia pickettii (strain 12J) protein is Protease HtpX homolog.